Here is a 489-residue protein sequence, read N- to C-terminus: Serine/threonine-protein kinase BSK3 (489 aa).

The N-myristoyl glycine moiety is linked to residue Gly-2. Residues 58 to 324 enclose the Protein kinase domain; sequence EYIVSEHGEK…ETEVLSHVLM (267 aa). ATP-binding positions include 64 to 72 and Lys-86; that span reads HGEKAPNVV. Asp-180 acts as the Proton acceptor in catalysis. Ser-212 is subject to Phosphoserine.

It belongs to the protein kinase superfamily. Ser/Thr protein kinase family. In terms of assembly, interacts with BRI1. In terms of processing, phosphorylated by BRI1 upon brassinolide (BL) treatment. Phosphorylated by ASK7/BIN2 and ASK9/BIL2.

It is found in the cell membrane. It carries out the reaction L-seryl-[protein] + ATP = O-phospho-L-seryl-[protein] + ADP + H(+). The enzyme catalyses L-threonyl-[protein] + ATP = O-phospho-L-threonyl-[protein] + ADP + H(+). Functionally, probable serine/threonine kinase that acts as a positive regulator of brassinosteroid (BR) signaling downstream of the receptor kinase BRI1. Mediates signal transduction from BRI1 by functioning as substrate of BRI1. Functions redundantly with BSK4, BSK6, BSK7 and BSK8. This is Serine/threonine-protein kinase BSK3 from Arabidopsis thaliana (Mouse-ear cress).